The following is a 475-amino-acid chain: Integrator complex subunit 15 (475 aa).

Residues 402-444 are disordered; the sequence is YPHIHPGRPSPLSPHSPHQSTLSSPHSPHTVLTAHPTHPALAP. Positions 416-430 are enriched in low complexity; that stretch reads HSPHQSTLSSPHSPH.

This sequence belongs to the Integrator subunit 15 family. As to quaternary structure, component of the Integrator complex, composed of core subunits INTS1, INTS2, INTS3, INTS4, INTS5, INTS6, INTS7, INTS8, INTS9/RC74, INTS10, INTS11/CPSF3L, INTS12, INTS13, INTS14 and INTS15. The core complex associates with protein phosphatase 2A subunits PPP2CA and PPP2R1A, to form the Integrator-PP2A (INTAC) complex. INTS15 is part of the tail subcomplex, composed of INTS10, INTS13, INTS14 and INTS15.

It is found in the nucleus. Its subcellular location is the chromosome. In terms of biological role, component of the integrator complex, a multiprotein complex that terminates RNA polymerase II (Pol II) transcription in the promoter-proximal region of genes. The integrator complex provides a quality checkpoint during transcription elongation by driving premature transcription termination of transcripts that are unfavorably configured for transcriptional elongation: the complex terminates transcription by (1) catalyzing dephosphorylation of the C-terminal domain (CTD) of Pol II subunit POLR2A/RPB1 and SUPT5H/SPT5, (2) degrading the exiting nascent RNA transcript via endonuclease activity and (3) promoting the release of Pol II from bound DNA. The integrator complex is also involved in terminating the synthesis of non-coding Pol II transcripts, such as enhancer RNAs (eRNAs), small nuclear RNAs (snRNAs), telomerase RNAs and long non-coding RNAs (lncRNAs). INTS15 is part of the integrator tail module that acts as a platform for the recruitment of transcription factors at promoters. Within the integrator complex, INTS15 is required to bridge different integrator modules. This chain is Integrator complex subunit 15 (ints15), found in Danio rerio (Zebrafish).